A 345-amino-acid chain; its full sequence is Putative mediator of RNA polymerase II transcription subunit 7 (345 aa).

Low complexity-rich tracts occupy residues 1-27 and 88-126; these read MNTS…TPQQ and NNNN…NNNN. Disordered stretches follow at residues 1 to 130 and 292 to 315; these read MNTS…KATT and TPLP…NNSQ.

It belongs to the Mediator complex subunit 7 family. As to quaternary structure, component of the Mediator complex.

It is found in the nucleus. In terms of biological role, component of the Mediator complex, a coactivator involved in the regulated transcription of nearly all RNA polymerase II-dependent genes. Mediator functions as a bridge to convey information from gene-specific regulatory proteins to the basal RNA polymerase II transcription machinery. Mediator is recruited to promoters by direct interactions with regulatory proteins and serves as a scaffold for the assembly of a functional preinitiation complex with RNA polymerase II and the general transcription factors. This Dictyostelium discoideum (Social amoeba) protein is Putative mediator of RNA polymerase II transcription subunit 7 (med7).